Here is a 466-residue protein sequence, read N- to C-terminus: MAVTINTELDPVFLKALGYLHSKSKDSAEKLKALLDESLCKGNDSVYRPQPKEMEQPKAMLSKVKPETKASSSTPSSSMLSKPLTSEKLKKEAEKRSADKMKVEISDVMDIPKKPRIEKTEARSSPVTVQLSKDLPVPDLSSFDETSADDFAMEMGLACVVCRQMTVFSGNQLVECQECHNLYHQDCHKPQVTDKDVNDPRLVWYCARCTRQMKRMAQKNQKPSQKPSPSAVSAVTPVAKDPSVNKPELKAKPDSANTFLAFKRAEVKASSAVSSSSSNSGVSSSSASGLTGWAAFGAKTANAVPVLGKLGTSSQATSGKPPSLSSVQKTGAAPGLAPSKPGSVSKSGSGGSSSSSTIPIKPLPPLILGKTGLSRSMSSDNVSKTGLPSPNPSSAGSVSSLSSQLGSNNGSSSAAGSNVTSSNKVAVDPSMQLSGAKGPTSQESQLNAMKRLQMVKKKAAQKKLKK.

Residues 41–101 (KGNDSVYRPQ…EAEKRSADKM (61 aa)) are disordered. The span at 69 to 84 (KASSSTPSSSMLSKPL) shows a compositional bias: low complexity. The span at 85-101 (TSEKLKKEAEKRSADKM) shows a compositional bias: basic and acidic residues. The PHD-type zinc finger occupies 156 to 212 (GLACVVCRQMTVFSGNQLVECQECHNLYHQDCHKPQVTDKDVNDPRLVWYCARCTRQ). Disordered regions lie at residues 216 to 251 (MAQKNQKPSQKPSPSAVSAVTPVAKDPSVNKPELKA) and 311 to 466 (GTSS…KLKK). 2 stretches are compositionally biased toward polar residues: residues 218 to 233 (QKNQKPSQKPSPSAVS) and 311 to 329 (GTSSQATSGKPPSLSSVQK). Residues 338 to 373 (PSKPGSVSKSGSGGSSSSSTIPIKPLPPLILGKTGL) show a composition bias toward low complexity. Over residues 374-386 (SRSMSSDNVSKTG) the composition is skewed to polar residues. A compositionally biased stretch (low complexity) spans 392–423 (PSSAGSVSSLSSQLGSNNGSSSAAGSNVTSSN). Positions 453–466 (QMVKKKAAQKKLKK) are enriched in basic residues.

The protein belongs to the Integrator subunit 12 family. In terms of assembly, component of the Integrator complex, composed of core subunits INTS1, INTS2, INTS3, INTS4, INTS5, INTS6, INTS7, INTS8, INTS9/RC74, INTS10, INTS11/CPSF3L, INTS12, INTS13, INTS14 and INTS15. The core complex associates with protein phosphatase 2A subunits PPP2CA and PPP2R1A, to form the Integrator-PP2A (INTAC) complex.

The protein resides in the nucleus. Component of the integrator complex, a multiprotein complex that terminates RNA polymerase II (Pol II) transcription in the promoter-proximal region of genes. The integrator complex provides a quality checkpoint during transcription elongation by driving premature transcription termination of transcripts that are unfavorably configured for transcriptional elongation: the complex terminates transcription by (1) catalyzing dephosphorylation of the C-terminal domain (CTD) of Pol II subunit POLR2A/RPB1 and SUPT5H/SPT5, (2) degrading the exiting nascent RNA transcript via endonuclease activity and (3) promoting the release of Pol II from bound DNA. The integrator complex is also involved in terminating the synthesis of non-coding Pol II transcripts, such as enhancer RNAs (eRNAs), small nuclear RNAs (snRNAs), telomerase RNAs and long non-coding RNAs (lncRNAs). The polypeptide is Integrator complex subunit 12 (ints12) (Xenopus tropicalis (Western clawed frog)).